A 322-amino-acid polypeptide reads, in one-letter code: Aspartate carbamoyltransferase catalytic subunit (322 aa).

Residues Arg65 and Thr66 each coordinate carbamoyl phosphate. Residue Lys93 coordinates L-aspartate. Carbamoyl phosphate-binding residues include Arg115, His143, and Gln146. 2 residues coordinate L-aspartate: Arg176 and Arg230. Residues Gly271 and Pro272 each coordinate carbamoyl phosphate.

The protein belongs to the aspartate/ornithine carbamoyltransferase superfamily. ATCase family. Heterododecamer (2C3:3R2) of six catalytic PyrB chains organized as two trimers (C3), and six regulatory PyrI chains organized as three dimers (R2).

It catalyses the reaction carbamoyl phosphate + L-aspartate = N-carbamoyl-L-aspartate + phosphate + H(+). Its pathway is pyrimidine metabolism; UMP biosynthesis via de novo pathway; (S)-dihydroorotate from bicarbonate: step 2/3. Its function is as follows. Catalyzes the condensation of carbamoyl phosphate and aspartate to form carbamoyl aspartate and inorganic phosphate, the committed step in the de novo pyrimidine nucleotide biosynthesis pathway. The protein is Aspartate carbamoyltransferase catalytic subunit of Brucella abortus (strain S19).